We begin with the raw amino-acid sequence, 246 residues long: 1-(5-phosphoribosyl)-5-[(5-phosphoribosylamino)methylideneamino] imidazole-4-carboxamide isomerase (246 aa).

Catalysis depends on aspartate 7, which acts as the Proton acceptor. Residue aspartate 129 is the Proton donor of the active site.

Belongs to the HisA/HisF family.

The protein resides in the cytoplasm. The catalysed reaction is 1-(5-phospho-beta-D-ribosyl)-5-[(5-phospho-beta-D-ribosylamino)methylideneamino]imidazole-4-carboxamide = 5-[(5-phospho-1-deoxy-D-ribulos-1-ylimino)methylamino]-1-(5-phospho-beta-D-ribosyl)imidazole-4-carboxamide. The protein operates within amino-acid biosynthesis; L-histidine biosynthesis; L-histidine from 5-phospho-alpha-D-ribose 1-diphosphate: step 4/9. The polypeptide is 1-(5-phosphoribosyl)-5-[(5-phosphoribosylamino)methylideneamino] imidazole-4-carboxamide isomerase (Buchnera aphidicola subsp. Acyrthosiphon pisum (strain 5A)).